Here is a 1962-residue protein sequence, read N- to C-terminus: Sodium channel protein type 10 subunit alpha (1962 aa).

At 1–125 the chain is on the cytoplasmic side; sequence MEFPFGSLET…FNLIRRTAIK (125 aa). The segment at 32 to 56 is disordered; sequence QAAKKAKGKHREQKDQEEKPRPQLD. A compositionally biased stretch (basic residues) spans 33–42; sequence AAKKAKGKHR. Residues 43–55 are compositionally biased toward basic and acidic residues; sequence EQKDQEEKPRPQL. The I repeat unit spans residues 116–414; the sequence is FNLIRRTAIK…VTMAYEEQNQ (299 aa). Residues 126-149 traverse the membrane as a helical segment; sequence VSVHSWFSLFITVTILVNCVGMTQ. Topologically, residues 150–154 are extracellular; that stretch reads TELPD. The helical transmembrane segment at 155–174 threads the bilayer; that stretch reads RIEYVFTVIYTFEALIKILA. At 175 to 187 the chain is on the cytoplasmic side; sequence RGFCLNEFAYLRD. The chain crosses the membrane as a helical span at residues 188 to 206; sequence PWDWLDFSVITLAYIGEAT. The Extracellular segment spans residues 207 to 212; that stretch reads ALRGIS. A helical; Voltage-sensor transmembrane segment spans residues 213–232; it reads GLRTFRVLRALKTVSVIPGL. The Cytoplasmic portion of the chain corresponds to 233–248; that stretch reads KVIVGALIHSVRKLAD. Residues 249 to 272 form a helical membrane-spanning segment; the sequence is VTILTVFCLSVFALVGLQLFKGNL. Over 273–350 the chain is Extracellular; sequence KNKCVKNCAA…PDFNYTSFDS (78 aa). A disulfide bridge connects residues Cys276 and Cys328. N-linked (GlcNAc...) asparagine glycans are attached at residues Asn284, Asn288, Asn321, and Asn344. The pore-forming intramembrane region spans 351–375; sequence FAWAFLSLFRLMTQDSWERLYQQTL. At 376–382 the chain is on the extracellular side; the sequence is RASGKMY. A helical membrane pass occupies residues 383-408; that stretch reads MVFFVLVIFLGSFYLVNLILAVVTMA. Residues 409 to 668 lie on the Cytoplasmic side of the membrane; it reads YEEQNQATID…TWVKLKTVLF (260 aa). 4 positions are modified to phosphoserine: Ser450, Ser453, Ser476, and Ser488. The span at 452 to 463 shows a compositional bias: polar residues; that stretch reads HSCNGSPLPSKN. Disordered regions lie at residues 452–493 and 521–586; these read HSCN…PYNQ and LDTS…TGEL. Ser621 and Ser624 each carry phosphoserine. An II repeat occupies 656 to 920; the sequence is CCPTWVKLKT…DEDGEVNNLQ (265 aa). The chain crosses the membrane as a helical span at residues 669–693; the sequence is GIVTDPFAELTTTLCIVVNTVFMAM. Topologically, residues 694–704 are extracellular; sequence EHHGMSSAFEA. The chain crosses the membrane as a helical span at residues 705–728; it reads MLQIGNIVFTVFFTAEMVFKIIAF. Over 729–736 the chain is Cytoplasmic; that stretch reads DPYYYFQK. Residues 737-756 form a helical membrane-spanning segment; the sequence is RWNIFDCIIVTVSLIELGAA. At 757–762 the chain is on the extracellular side; the sequence is RKGSLS. The chain crosses the membrane as a helical; Voltage-sensor span at residues 763-782; the sequence is VLRTFRLLRVFKLAKSWPTL. The Cytoplasmic segment spans residues 783–798; the sequence is NTLIKIIGNSVGALGN. Residues 799–819 traverse the membrane as a helical segment; that stretch reads LTIILAIIVFVFALVGKQLLG. The Extracellular segment spans residues 820-843; sequence ENYRDNRRNISAPNEEWPRWHMHD. An N-linked (GlcNAc...) asparagine glycan is attached at Asn828. Residues 844 to 864 constitute an intramembrane region (pore-forming); it reads FFHSFLIVFRILCGEWIENMW. Topologically, residues 865-873 are extracellular; the sequence is ACMEVGQKS. The cysteines at positions 866 and 875 are disulfide-linked. A helical membrane pass occupies residues 874 to 899; that stretch reads ICLILFLTVMVLGNLVVLNLFTALLL. Over 900 to 1154 the chain is Cytoplasmic; that stretch reads NSFSADNLAT…GWQVRKTCYR (255 aa). Residues 1015–1026 are compositionally biased toward acidic residues; the sequence is LDDLEEDGEEDS. The tract at residues 1015-1035 is disordered; that stretch reads LDDLEEDGEEDSQSSQQEVIL. One copy of the III repeat lies at 1147–1456; the sequence is QVRKTCYRIV…KKYYNAMKKL (310 aa). A helical transmembrane segment spans residues 1155–1178; that stretch reads IVEHSWFESFIIFMILLSSGSLAF. The Extracellular segment spans residues 1179–1191; it reads EDYHLDQKPTVKA. The helical transmembrane segment at 1192 to 1217 threads the bilayer; sequence LLEYTDRMFTFIFVLEMLLKWVAYGF. Residues 1218-1223 are Cytoplasmic-facing; it reads KKYFTN. The helical transmembrane segment at 1224–1245 threads the bilayer; that stretch reads AWCWLDFLIVNISLISLIAKIL. Residues 1246–1249 lie on the Extracellular side of the membrane; it reads QYSD. The chain crosses the membrane as a helical; Voltage-sensor span at residues 1250-1271; it reads VASIKALRTLRALRPLRALSRF. Over 1272-1290 the chain is Cytoplasmic; it reads EGMRVVVDALVGAIPSIMN. The chain crosses the membrane as a helical span at residues 1291 to 1318; the sequence is VLLVCLIFWLIFSTMGVNFFAGKFGRCI. N-linked (GlcNAc...) asparagine glycosylation is found at Asn1319, Asn1335, and Asn1343. The Extracellular portion of the chain corresponds to 1319–1360; it reads NKTNEYFSLVPLSIVNNISDCKYQNHTGSFFWVNVKVNFDNV. An intramembrane region (pore-forming) is located at residues 1361-1382; that stretch reads AMGYLALLQVATFKGWMDIMYA. Over 1383 to 1398 the chain is Extracellular; the sequence is AVDARDVNLQPKWEDN. A helical membrane pass occupies residues 1399–1425; sequence VYMYLYFVIFIIFGGFFTLNLFVGVII. The Cytoplasmic portion of the chain corresponds to 1426 to 1478; that stretch reads DNFNQQKKKLGGQDIFMTEEQKKYYNAMKKLGSKKPQKPIPRPLNKYQGFVFD. Residue Ser1458 is modified to Phosphoserine; by PKC. The IV repeat unit spans residues 1465–1764; that stretch reads IPRPLNKYQG…WEKFDPEATQ (300 aa). A helical transmembrane segment spans residues 1479 to 1502; the sequence is IVTKQAFDIVIMVLICLNMITMMV. Topologically, residues 1503 to 1513 are extracellular; sequence ETDEQSAEKTK. A helical transmembrane segment spans residues 1514-1537; that stretch reads ILNKINQFFVAVFTGECVMKMFAL. Residues 1538 to 1543 lie on the Cytoplasmic side of the membrane; sequence RHYYFT. The chain crosses the membrane as a helical span at residues 1544-1567; that stretch reads NGWNVFDFIVVVLSIGSLVFSVIL. Residues 1568–1579 lie on the Extracellular side of the membrane; the sequence is TSLENYFSPTLF. The helical; Voltage-sensor transmembrane segment at 1580–1601 threads the bilayer; it reads RVIRLARIGRILRLIRAAKGIR. At 1602-1616 the chain is on the cytoplasmic side; that stretch reads TLLFALMMSLPALFN. Residues 1617 to 1639 traverse the membrane as a helical segment; sequence IGLLLFLVMFIYSIFGMASFPHV. Residues 1640–1653 lie on the Extracellular side of the membrane; the sequence is SWEAGIDDMFNFQT. Positions 1654–1676 form an intramembrane region, pore-forming; it reads FANSMLCLFQITTSAGWDGLLSP. At 1677–1704 the chain is on the extracellular side; it reads ILNTGPPYCDPNLPNSNGSRGNCGSPAV. N-linked (GlcNAc...) asparagine glycosylation occurs at Asn1693. A helical transmembrane segment spans residues 1705–1729; the sequence is GILFFTTYIIISFLIVVNMYIAVIL. The Cytoplasmic portion of the chain corresponds to 1730–1962; it reads ENFNVATQES…TSKKVTAPGP (233 aa). Positions 1858 to 1887 constitute an IQ domain; it reads EDISATVIQKAYRSYVLHRSMTISNPPAVP. The interval 1914-1962 is disordered; it reads KSETASAASFPPSYDSVTRGLSDQINMSTSSSMQNEDEGTSKKVTAPGP. A compositionally biased stretch (polar residues) spans 1928–1947; that stretch reads DSVTRGLSDQINMSTSSSMQ.

The protein belongs to the sodium channel (TC 1.A.1.10) family. Nav1.8/SCN10A subfamily. As to quaternary structure, the channel consists of an ion conducting pore forming alpha-subunit regulated by one or more associated auxiliary subunits SCN1B, SCN2B and SCN3B; electrophysiological properties may vary depending on the type of the associated beta subunits. Found in a number of complexes with PRX, DYNLT1 and PDZD2. Interacts with proteins such as FSTL1, PRX, DYNLT1, PDZD2, S100A10 and many others. Interacts with NEDD4 and NEDD4L. In terms of processing, ubiquitinated by NEDD4L; which promotes its endocytosis. Phosphorylation at Ser-1458 by PKC in a highly conserved cytoplasmic loop slows inactivation of the sodium channel and reduces peak sodium currents. Post-translationally, lacks the cysteine which covalently binds the conotoxin GVIIJ. This cysteine (position 825) is speculated in other sodium channel subunits alpha to be implied in covalent binding with the sodium channel subunit beta-2 or beta-4. As to expression, expressed in nodose ganglia, but not in cortex, hippocampus, cerebellum, liver, heart and skeletal muscle.

The protein localises to the cell membrane. The catalysed reaction is Na(+)(in) = Na(+)(out). Functionally, tetrodotoxin-resistant channel that mediates the voltage-dependent sodium ion permeability of excitable membranes. Assuming opened or closed conformations in response to the voltage difference across the membrane, the protein forms a sodium-selective channel through which sodium ions may pass in accordance with their electrochemical gradient. Plays a role in neuropathic pain mechanisms. In Canis lupus familiaris (Dog), this protein is Sodium channel protein type 10 subunit alpha (SCN10A).